Consider the following 195-residue polypeptide: 3-isopropylmalate dehydratase small subunit (195 aa).

It belongs to the LeuD family. LeuD type 1 subfamily. As to quaternary structure, heterodimer of LeuC and LeuD.

The catalysed reaction is (2R,3S)-3-isopropylmalate = (2S)-2-isopropylmalate. The protein operates within amino-acid biosynthesis; L-leucine biosynthesis; L-leucine from 3-methyl-2-oxobutanoate: step 2/4. In terms of biological role, catalyzes the isomerization between 2-isopropylmalate and 3-isopropylmalate, via the formation of 2-isopropylmaleate. This is 3-isopropylmalate dehydratase small subunit from Karelsulcia muelleri (strain GWSS) (Sulcia muelleri).